Here is a 345-residue protein sequence, read N- to C-terminus: UDP-3-O-acylglucosamine N-acyltransferase (345 aa).

The active-site Proton acceptor is His-237.

This sequence belongs to the transferase hexapeptide repeat family. LpxD subfamily. Homotrimer.

It carries out the reaction a UDP-3-O-[(3R)-3-hydroxyacyl]-alpha-D-glucosamine + a (3R)-hydroxyacyl-[ACP] = a UDP-2-N,3-O-bis[(3R)-3-hydroxyacyl]-alpha-D-glucosamine + holo-[ACP] + H(+). Its pathway is bacterial outer membrane biogenesis; LPS lipid A biosynthesis. Catalyzes the N-acylation of UDP-3-O-acylglucosamine using 3-hydroxyacyl-ACP as the acyl donor. Is involved in the biosynthesis of lipid A, a phosphorylated glycolipid that anchors the lipopolysaccharide to the outer membrane of the cell. This is UDP-3-O-acylglucosamine N-acyltransferase from Geobacter sp. (strain M21).